We begin with the raw amino-acid sequence, 447 residues long: Phosphoglucosamine mutase (447 aa).

The Phosphoserine intermediate role is filled by Ser107. Positions 107, 246, 248, and 250 each coordinate Mg(2+). Ser107 is modified (phosphoserine).

Belongs to the phosphohexose mutase family. It depends on Mg(2+) as a cofactor. Activated by phosphorylation.

It carries out the reaction alpha-D-glucosamine 1-phosphate = D-glucosamine 6-phosphate. In terms of biological role, catalyzes the conversion of glucosamine-6-phosphate to glucosamine-1-phosphate. The protein is Phosphoglucosamine mutase of Ralstonia pickettii (strain 12J).